The chain runs to 403 residues: uncharacterized protein (403 aa).

Residue His-81 coordinates Zn(2+). The active site involves Asp-83. Zn(2+) is bound at residue Asp-114. The active-site Proton acceptor is Glu-148. Residues Glu-149, Glu-174, and His-374 each contribute to the Zn(2+) site.

Belongs to the peptidase M20A family. The cofactor is Zn(2+). Requires Co(2+) as cofactor.

This is an uncharacterized protein from Escherichia coli O157:H7.